Reading from the N-terminus, the 155-residue chain is SsrA-binding protein (155 aa).

It belongs to the SmpB family.

It localises to the cytoplasm. Functionally, required for rescue of stalled ribosomes mediated by trans-translation. Binds to transfer-messenger RNA (tmRNA), required for stable association of tmRNA with ribosomes. tmRNA and SmpB together mimic tRNA shape, replacing the anticodon stem-loop with SmpB. tmRNA is encoded by the ssrA gene; the 2 termini fold to resemble tRNA(Ala) and it encodes a 'tag peptide', a short internal open reading frame. During trans-translation Ala-aminoacylated tmRNA acts like a tRNA, entering the A-site of stalled ribosomes, displacing the stalled mRNA. The ribosome then switches to translate the ORF on the tmRNA; the nascent peptide is terminated with the 'tag peptide' encoded by the tmRNA and targeted for degradation. The ribosome is freed to recommence translation, which seems to be the essential function of trans-translation. This Streptococcus sanguinis (strain SK36) protein is SsrA-binding protein.